The following is a 380-amino-acid chain: Probable dual-specificity RNA methyltransferase RlmN (380 aa).

Glu123 serves as the catalytic Proton acceptor. In terms of domain architecture, Radical SAM core spans 129–362; that stretch reads HEYGNSVCVT…VTIRREQGSD (234 aa). The cysteines at positions 136 and 367 are disulfide-linked. [4Fe-4S] cluster contacts are provided by Cys143, Cys147, and Cys150. S-adenosyl-L-methionine is bound by residues 193–194, Ser225, 248–250, and Asn324; these read GE and SLH. Residue Cys367 is the S-methylcysteine intermediate of the active site.

It belongs to the radical SAM superfamily. RlmN family. Requires [4Fe-4S] cluster as cofactor.

Its subcellular location is the cytoplasm. The catalysed reaction is adenosine(2503) in 23S rRNA + 2 reduced [2Fe-2S]-[ferredoxin] + 2 S-adenosyl-L-methionine = 2-methyladenosine(2503) in 23S rRNA + 5'-deoxyadenosine + L-methionine + 2 oxidized [2Fe-2S]-[ferredoxin] + S-adenosyl-L-homocysteine. It catalyses the reaction adenosine(37) in tRNA + 2 reduced [2Fe-2S]-[ferredoxin] + 2 S-adenosyl-L-methionine = 2-methyladenosine(37) in tRNA + 5'-deoxyadenosine + L-methionine + 2 oxidized [2Fe-2S]-[ferredoxin] + S-adenosyl-L-homocysteine. In terms of biological role, specifically methylates position 2 of adenine 2503 in 23S rRNA and position 2 of adenine 37 in tRNAs. The chain is Probable dual-specificity RNA methyltransferase RlmN from Lysinibacillus sphaericus (strain C3-41).